The sequence spans 507 residues: Hexokinase-5 (507 aa).

Residues 4–24 form a helical membrane-spanning segment; that stretch reads AAAVGTAVVVAAAVGVAVVLA. Residues 44 to 498 form the Hexokinase domain; it reads RKVAAVIEDV…SGIGAALLAA (455 aa). The tract at residues 99 to 237 is hexokinase small subdomain; it reads TGNEQGLFYA…GLDMKIAALV (139 aa). ADP is bound by residues Gly-113, Thr-114, and Asn-115. D-glucose is bound by residues Thr-203, Lys-204, Asn-238, and Asp-239. The tract at residues 238–487 is hexokinase large subdomain; that stretch reads NDTVGTLAGG…SSVVTKLAND (250 aa). Thr-262 contributes to the ADP binding site. D-glucose-binding residues include Asn-265, Glu-293, and Glu-324. An ADP-binding site is contributed by Gly-452.

It belongs to the hexokinase family. As to expression, expressed in roots, leaves, flowers, immature seeds, endosperm and seed coat.

It is found in the plastid. The protein resides in the chloroplast outer membrane. It catalyses the reaction a D-hexose + ATP = a D-hexose 6-phosphate + ADP + H(+). The enzyme catalyses D-fructose + ATP = D-fructose 6-phosphate + ADP + H(+). It carries out the reaction D-glucose + ATP = D-glucose 6-phosphate + ADP + H(+). The protein operates within carbohydrate metabolism; hexose metabolism. Its pathway is carbohydrate degradation; glycolysis; D-glyceraldehyde 3-phosphate and glycerone phosphate from D-glucose: step 1/4. Fructose and glucose phosphorylating enzyme. Functions as a glucose sensor for plant growth and photosynthesis. Is essential for pollen development, germination, and tube growth. Its activity is necessary for the starch utilization pathway during pollen germination and tube growth, as well as for starch biosynthesis during pollen maturation. This chain is Hexokinase-5 (HXK5), found in Oryza sativa subsp. japonica (Rice).